The chain runs to 276 residues: Malonyl-[acyl-carrier protein] O-methyltransferase (276 aa).

The protein belongs to the methyltransferase superfamily.

It carries out the reaction malonyl-[ACP] + S-adenosyl-L-methionine = malonyl-[ACP] methyl ester + S-adenosyl-L-homocysteine. Its pathway is cofactor biosynthesis; biotin biosynthesis. Functionally, converts the free carboxyl group of a malonyl-thioester to its methyl ester by transfer of a methyl group from S-adenosyl-L-methionine (SAM). It allows to synthesize pimeloyl-ACP via the fatty acid synthetic pathway. The chain is Malonyl-[acyl-carrier protein] O-methyltransferase from Paenibacillus sp. (strain JDR-2).